We begin with the raw amino-acid sequence, 188 residues long: CASP-like protein 4B3 (188 aa).

A disordered region spans residues Met1–Val21. Residues Met1–Leu42 lie on the Cytoplasmic side of the membrane. The helical transmembrane segment at Leu43–Val63 threads the bilayer. The Extracellular portion of the chain corresponds to His64–Pro76. A helical transmembrane segment spans residues Glu77–Val97. Residues Arg98–Lys114 are Cytoplasmic-facing. A helical membrane pass occupies residues Ala115–Leu135. The Extracellular portion of the chain corresponds to Ser136–Ser156. An N-linked (GlcNAc...) asparagine glycan is attached at Asn154. The chain crosses the membrane as a helical span at residues Ala157–Ile177. Topologically, residues Ser178–Val188 are cytoplasmic.

The protein belongs to the Casparian strip membrane proteins (CASP) family. As to quaternary structure, homodimer and heterodimers.

Its subcellular location is the cell membrane. In Hordeum vulgare subsp. vulgare (Domesticated barley), this protein is CASP-like protein 4B3.